Here is a 445-residue protein sequence, read N- to C-terminus: Tubulin beta chain (445 aa).

Positions 1-4 (MREI) match the MREI motif motif. Residues Q11, E69, S138, G142, T143, G144, N204, and N226 each contribute to the GTP site. E69 is a binding site for Mg(2+). The disordered stretch occupies residues 421-445 (EYQQYQDATAEEEGEGEEEGDEEVA). Over residues 429–445 (TAEEEGEGEEEGDEEVA) the composition is skewed to acidic residues. At E438 the chain carries 5-glutamyl polyglutamate.

Belongs to the tubulin family. In terms of assembly, dimer of alpha and beta chains. A typical microtubule is a hollow water-filled tube with an outer diameter of 25 nm and an inner diameter of 15 nM. Alpha-beta heterodimers associate head-to-tail to form protofilaments running lengthwise along the microtubule wall with the beta-tubulin subunit facing the microtubule plus end conferring a structural polarity. Microtubules usually have 13 protofilaments but different protofilament numbers can be found in some organisms and specialized cells. It depends on Mg(2+) as a cofactor. In terms of processing, some glutamate residues at the C-terminus are polyglycylated, resulting in polyglycine chains on the gamma-carboxyl group. Glycylation is mainly limited to tubulin incorporated into axonemes (cilia and flagella) whereas glutamylation is prevalent in neuronal cells, centrioles, axonemes, and the mitotic spindle. Both modifications can coexist on the same protein on adjacent residues, and lowering polyglycylation levels increases polyglutamylation, and reciprocally. The precise function of polyglycylation is still unclear. Post-translationally, some glutamate residues at the C-terminus are polyglutamylated, resulting in polyglutamate chains on the gamma-carboxyl group. Polyglutamylation plays a key role in microtubule severing by spastin (SPAST). SPAST preferentially recognizes and acts on microtubules decorated with short polyglutamate tails: severing activity by SPAST increases as the number of glutamates per tubulin rises from one to eight, but decreases beyond this glutamylation threshold. In terms of tissue distribution, brain.

The protein resides in the cytoplasm. The protein localises to the cytoskeleton. In terms of biological role, tubulin is the major constituent of microtubules, a cylinder consisting of laterally associated linear protofilaments composed of alpha- and beta-tubulin heterodimers. Microtubules grow by the addition of GTP-tubulin dimers to the microtubule end, where a stabilizing cap forms. Below the cap, tubulin dimers are in GDP-bound state, owing to GTPase activity of alpha-tubulin. In Pseudopleuronectes americanus (Winter flounder), this protein is Tubulin beta chain.